The following is a 55-amino-acid chain: UPF0391 membrane protein Meso_3110 (55 aa).

A run of 2 helical transmembrane segments spans residues 4-24 (WALV…GGIA) and 30-50 (IAQI…LFGL).

It belongs to the UPF0391 family.

The protein resides in the cell membrane. The chain is UPF0391 membrane protein Meso_3110 from Chelativorans sp. (strain BNC1).